The primary structure comprises 1076 residues: Hormone-sensitive lipase (1076 aa).

Composition is skewed to polar residues over residues 1–12 (MEPGSKSVSRSD) and 38–64 (ESKT…QETP). Disordered stretches follow at residues 1–198 (MEPG…KSKQ) and 229–250 (VTDS…PATM). Residues 65–77 (AQHDAESQKEPRA) are compositionally biased toward basic and acidic residues. The span at 94 to 116 (APQQSPYIQRVLLTQQEAASQQG) shows a compositional bias: polar residues. Pro residues predominate over residues 140-149 (GPGPGEPPPA). The span at 150 to 161 (QQEAESTPAAQA) shows a compositional bias: low complexity. A compositionally biased stretch (polar residues) spans 172–198 (PTESTSQETPEQSDKQTTPVQGAKSKQ). Positions 237–246 (DVGSSSDTDS) are enriched in low complexity. The Involved in the stabilization of the negatively charged intermediate by the formation of the oxyanion hole signature appears at 651 to 653 (HGG). Serine 725 is an active-site residue. Positions 838 to 930 (KSQKMSEPIA…EAEAKNELSP (93 aa)) are disordered. Serine 853 bears the Phosphoserine mark. A Phosphoserine; by AMPK modification is found at serine 855. The segment covering 882-908 (RGNSETSSDTPEMSLSAETLSPSTPSD) has biased composition (polar residues). Phosphoserine is present on residues serine 897, serine 929, serine 950, and serine 951. Residues aspartate 994 and histidine 1024 contribute to the active site. Residues 1055–1076 (AGAGPSGETGAAGVDGGCGGRH) form a disordered region. Gly residues predominate over residues 1067 to 1076 (GVDGGCGGRH).

The protein belongs to the 'GDXG' lipolytic enzyme family. As to quaternary structure, monomer and homodimer. Interacts with CAVIN1 in the adipocyte cytoplasm. Interacts with PLIN5. Phosphorylation by AMPK reduces its translocation towards the lipid droplets. In terms of tissue distribution, testis.

It is found in the cell membrane. The protein localises to the membrane. Its subcellular location is the caveola. It localises to the cytoplasm. The protein resides in the cytosol. It is found in the lipid droplet. It carries out the reaction a diacylglycerol + H2O = a monoacylglycerol + a fatty acid + H(+). The catalysed reaction is a triacylglycerol + H2O = a diacylglycerol + a fatty acid + H(+). It catalyses the reaction a monoacylglycerol + H2O = glycerol + a fatty acid + H(+). The enzyme catalyses Hydrolyzes glycerol monoesters of long-chain fatty acids.. It carries out the reaction 1,2-di-(9Z-octadecenoyl)-glycerol + (9Z)-octadecenoate + H(+) = 1,2,3-tri-(9Z-octadecenoyl)-glycerol + H2O. The catalysed reaction is 2,3-di-(9Z)-octadecenoyl-sn-glycerol + H2O = 2-(9Z-octadecenoyl)-glycerol + (9Z)-octadecenoate + H(+). It catalyses the reaction cholesteryl (9Z-octadecenoate) + H2O = cholesterol + (9Z)-octadecenoate + H(+). The enzyme catalyses 1,2,3-tri-(9Z-octadecenoyl)-glycerol + H2O = di-(9Z)-octadecenoylglycerol + (9Z)-octadecenoate + H(+). It carries out the reaction all-trans-retinyl hexadecanoate + H2O = all-trans-retinol + hexadecanoate + H(+). The catalysed reaction is 1,2-di-(9Z-octadecenoyl)-glycerol + H2O = (9Z-octadecenoyl)-glycerol + (9Z)-octadecenoate + H(+). It catalyses the reaction 2-(5Z,8Z,11Z,14Z-eicosatetraenoyl)-glycerol + H2O = glycerol + (5Z,8Z,11Z,14Z)-eicosatetraenoate + H(+). The enzyme catalyses 1-(9Z-octadecenoyl)-glycerol + H2O = glycerol + (9Z)-octadecenoate + H(+). It carries out the reaction 2-(9Z-octadecenoyl)-glycerol + H2O = glycerol + (9Z)-octadecenoate + H(+). The catalysed reaction is 1-O-hexadecyl-2-acetyl-sn-glycerol + H2O = 1-O-hexadecyl-sn-glycerol + acetate + H(+). It catalyses the reaction 1,2-di-(9Z-octadecenoyl)-sn-glycerol + H2O = (9Z-octadecenoyl)-glycerol + (9Z)-octadecenoate + H(+). The enzyme catalyses 1,3-di-(9Z-octadecenoyl)-glycerol + H2O = 1-(9Z-octadecenoyl)-glycerol + (9Z)-octadecenoate + H(+). It carries out the reaction 1,2-di-(9Z-octadecenoyl)-glycerol + H2O = 2-(9Z-octadecenoyl)-glycerol + (9Z)-octadecenoate + H(+). It functions in the pathway glycerolipid metabolism; triacylglycerol degradation. Its activity is regulated as follows. Retinyl ester hydrolase is inhibited by bis-p-nitrophenyl phosphate. In terms of biological role, lipase with broad substrate specificity, catalyzing the hydrolysis of triacylglycerols (TAGs), diacylglycerols (DAGs), monoacylglycerols (MAGs), cholesteryl esters and retinyl esters. Shows a preferential hydrolysis of DAGs over TAGs and MAGs and preferentially hydrolyzes the fatty acid (FA) esters at the sn-3 position of the glycerol backbone in DAGs. Preferentially hydrolyzes FA esters at the sn-1 and sn-2 positions of the glycerol backbone in TAGs. Catalyzes the hydrolysis of 2-arachidonoylglycerol, an endocannabinoid and of 2-acetyl monoalkylglycerol ether, the penultimate precursor of the pathway for de novo synthesis of platelet-activating factor. In adipose tissue and heart, it primarily hydrolyzes stored triglycerides to free fatty acids, while in steroidogenic tissues, it principally converts cholesteryl esters to free cholesterol for steroid hormone production. This Homo sapiens (Human) protein is Hormone-sensitive lipase (LIPE).